Consider the following 305-residue polypeptide: Ornithine carbamoyltransferase (305 aa).

Residues 52–55 (STRT), Q79, R103, and 130–133 (HPCQ) contribute to the carbamoyl phosphate site. L-ornithine is bound by residues N161, D221, and 225–226 (SM). Residues 261-262 (CL) and R289 contribute to the carbamoyl phosphate site.

Belongs to the aspartate/ornithine carbamoyltransferase superfamily. OTCase family.

It is found in the cytoplasm. The catalysed reaction is carbamoyl phosphate + L-ornithine = L-citrulline + phosphate + H(+). The protein operates within amino-acid biosynthesis; L-arginine biosynthesis; L-arginine from L-ornithine and carbamoyl phosphate: step 1/3. In terms of biological role, reversibly catalyzes the transfer of the carbamoyl group from carbamoyl phosphate (CP) to the N(epsilon) atom of ornithine (ORN) to produce L-citrulline. In Methanocorpusculum labreanum (strain ATCC 43576 / DSM 4855 / Z), this protein is Ornithine carbamoyltransferase.